Reading from the N-terminus, the 356-residue chain is Phospho-N-acetylmuramoyl-pentapeptide-transferase (356 aa).

Transmembrane regions (helical) follow at residues 25–45, 70–90, 93–113, 138–158, 164–184, 195–215, 232–252, 258–278, 284–304, and 333–353; these read TVAA…SIIS, GTPT…ALLW, LFNI…AIGF, FLVA…GLAL, YFIN…VGLG, GLAI…AYLS, VGEL…FLWF, AIFM…IVSV, IVLI…IIQV, and QIVV…LSTL.

Belongs to the glycosyltransferase 4 family. MraY subfamily. It depends on Mg(2+) as a cofactor.

Its subcellular location is the cell inner membrane. The enzyme catalyses UDP-N-acetyl-alpha-D-muramoyl-L-alanyl-gamma-D-glutamyl-meso-2,6-diaminopimeloyl-D-alanyl-D-alanine + di-trans,octa-cis-undecaprenyl phosphate = di-trans,octa-cis-undecaprenyl diphospho-N-acetyl-alpha-D-muramoyl-L-alanyl-D-glutamyl-meso-2,6-diaminopimeloyl-D-alanyl-D-alanine + UMP. It participates in cell wall biogenesis; peptidoglycan biosynthesis. Functionally, catalyzes the initial step of the lipid cycle reactions in the biosynthesis of the cell wall peptidoglycan: transfers peptidoglycan precursor phospho-MurNAc-pentapeptide from UDP-MurNAc-pentapeptide onto the lipid carrier undecaprenyl phosphate, yielding undecaprenyl-pyrophosphoryl-MurNAc-pentapeptide, known as lipid I. This Bartonella bacilliformis (strain ATCC 35685 / KC583 / Herrer 020/F12,63) protein is Phospho-N-acetylmuramoyl-pentapeptide-transferase.